The sequence spans 228 residues: Thermonuclease (228 aa).

The N-terminal stretch at 1–23 is a signal peptide; it reads MTEYLLSAGICMAIVSILLIGMA. The propeptide occupies 24 to 60; it reads ISNVSKGQYAKRFFFFATSCLVLTLVVVSSLSSSANA. Over residues 58-70 the composition is skewed to polar residues; sequence ANASQTDNGVNRS. Residues 58 to 83 form a disordered region; sequence ANASQTDNGVNRSGSEDPTVYSATST. Position 100 (Asp-100) interacts with Ca(2+). Residue Arg-114 is part of the active site. Asp-119 and Thr-120 together coordinate Ca(2+). Residues Glu-122 and Arg-166 contribute to the active site.

This sequence belongs to the thermonuclease family. The cofactor is Ca(2+).

It localises to the secreted. It carries out the reaction Endonucleolytic cleavage to nucleoside 3'-phosphates and 3'-phosphooligonucleotide end-products.. Functionally, enzyme that catalyzes the hydrolysis of both DNA and RNA at the 5' position of the phosphodiester bond. The polypeptide is Thermonuclease (nuc) (Staphylococcus aureus (strain Mu50 / ATCC 700699)).